We begin with the raw amino-acid sequence, 332 residues long: Biotin synthase (332 aa).

One can recognise a Radical SAM core domain in the interval 53 to 282; the sequence is YFGKKVKLNM…TKEIRISGGR (230 aa). Residues cysteine 71, cysteine 75, and cysteine 78 each contribute to the [4Fe-4S] cluster site. [2Fe-2S] cluster-binding residues include cysteine 115, cysteine 147, cysteine 207, and arginine 277.

This sequence belongs to the radical SAM superfamily. Biotin synthase family. As to quaternary structure, homodimer. [4Fe-4S] cluster serves as cofactor. It depends on [2Fe-2S] cluster as a cofactor.

It carries out the reaction (4R,5S)-dethiobiotin + (sulfur carrier)-SH + 2 reduced [2Fe-2S]-[ferredoxin] + 2 S-adenosyl-L-methionine = (sulfur carrier)-H + biotin + 2 5'-deoxyadenosine + 2 L-methionine + 2 oxidized [2Fe-2S]-[ferredoxin]. The protein operates within cofactor biosynthesis; biotin biosynthesis; biotin from 7,8-diaminononanoate: step 2/2. In terms of biological role, catalyzes the conversion of dethiobiotin (DTB) to biotin by the insertion of a sulfur atom into dethiobiotin via a radical-based mechanism. This Bacillus anthracis protein is Biotin synthase.